Here is a 403-residue protein sequence, read N- to C-terminus: Phosphoglycerate kinase (403 aa).

Residues 24-26 (DLN), Arg-39, 62-65 (HLGR), Arg-121, and Arg-161 each bind substrate. ATP contacts are provided by residues Lys-211, Gly-299, Glu-330, and 359 to 362 (GGDS).

The protein belongs to the phosphoglycerate kinase family. In terms of assembly, monomer.

It localises to the cytoplasm. The enzyme catalyses (2R)-3-phosphoglycerate + ATP = (2R)-3-phospho-glyceroyl phosphate + ADP. It functions in the pathway carbohydrate degradation; glycolysis; pyruvate from D-glyceraldehyde 3-phosphate: step 2/5. The polypeptide is Phosphoglycerate kinase (Rhodococcus jostii (strain RHA1)).